A 596-amino-acid polypeptide reads, in one-letter code: Adenine deaminase (596 aa).

This sequence belongs to the metallo-dependent hydrolases superfamily. Adenine deaminase family. Mn(2+) is required as a cofactor.

The enzyme catalyses adenine + H2O + H(+) = hypoxanthine + NH4(+). The polypeptide is Adenine deaminase (Moorella thermoacetica (strain ATCC 39073 / JCM 9320)).